A 695-amino-acid polypeptide reads, in one-letter code: Cysteine-rich receptor-like protein kinase 6 (695 aa).

Residues 1 to 31 form the signal peptide; that stretch reads MRRHRPYLDGVAAAAATFLLAVLLHAPLAAG. The Extracellular segment spans residues 32-294; it reads EDEPPPWVLC…ATSGEKTKNR (263 aa). Gnk2-homologous domains follow at residues 38-142 and 151-261; these read WVLC…NRDF and TTYT…VFPF. N-linked (GlcNAc...) asparagine glycans are attached at residues asparagine 49, asparagine 53, asparagine 70, and asparagine 101. Disulfide bonds link cysteine 96–cysteine 105 and cysteine 108–cysteine 133. N-linked (GlcNAc...) asparagine glycosylation occurs at asparagine 178. Intrachain disulfides connect cysteine 215–cysteine 224 and cysteine 227–cysteine 252. Residues 295 to 315 form a helical membrane-spanning segment; it reads IGTVLAIVMPAIAAILLMVVA. Over 316-695 the chain is Cytoplasmic; it reads CFCCWKRIKK…DLSITELVPR (380 aa). Positions 363-634 constitute a Protein kinase domain; it reads FADTKMIGQG…PTISSVNIML (272 aa). ATP contacts are provided by residues 369–377 and lysine 391; that span reads IGQGGFGMV. The active-site Proton acceptor is the aspartate 488. The tract at residues 658-682 is disordered; the sequence is DSSNPYSERYPRPRHSGYSDNSTVV.

Belongs to the protein kinase superfamily. Ser/Thr protein kinase family. CRK subfamily.

It localises to the membrane. Involved in disease resistance. Required for NPR1/NH1-mediated immunity to the bacterial blight pathogen Xanthomomas oryzae pv. oryzae (Xoo). Required for the benzothiadiazole (BTH)-induced immune response. Possesses kinase activity in vitro. This chain is Cysteine-rich receptor-like protein kinase 6, found in Oryza sativa subsp. japonica (Rice).